The primary structure comprises 84 residues: Elongation factor 1-beta (84 aa).

It belongs to the EF-1-beta/EF-1-delta family.

Its function is as follows. Promotes the exchange of GDP for GTP in EF-1-alpha/GDP, thus allowing the regeneration of EF-1-alpha/GTP that could then be used to form the ternary complex EF-1-alpha/GTP/AAtRNA. In Methanoculleus marisnigri (strain ATCC 35101 / DSM 1498 / JR1), this protein is Elongation factor 1-beta.